The chain runs to 295 residues: Proline-rich protein 18 (295 aa).

The span at 1–13 (MPFPPMPPPPAPA) shows a compositional bias: pro residues. Positions 1–133 (MPFPPMPPPP…GAGPCPDSAA (133 aa)) are disordered. Low complexity predominate over residues 14–29 (PGAQAARQLPRRPCAA). Phosphoserine is present on Ser47. Omega-N-methylarginine is present on Arg83. Residues 103-126 (ARTTYAATSAGTGTTAAGTSSGAG) are compositionally biased toward low complexity. Arg172 is subject to Asymmetric dimethylarginine. Positions 181–192 (ARAAGPRRGGPA) are enriched in low complexity. The tract at residues 181–227 (ARAAGPRRGGPASDPDAPPTAGQGRRAPPPGAQLLHGGLQVPQLSPR) is disordered. At Arg188 the chain carries Omega-N-methylarginine.

This is Proline-rich protein 18 (PRR18) from Homo sapiens (Human).